We begin with the raw amino-acid sequence, 271 residues long: N-acylmannosamine 1-dehydrogenase (271 aa).

20–44 (VTGAAGGIGRATVEAYLREGASVVA) is a binding site for NAD(+). Residue Ser153 participates in substrate binding. Residue Tyr166 is the Proton acceptor of the active site.

It belongs to the short-chain dehydrogenases/reductases (SDR) family.

It carries out the reaction an N-acyl-D-mannosamine + NAD(+) = an N-acyl-D-mannosaminolactone + NADH + H(+). Its function is as follows. Acts on acetyl-D-mannosamine and glycolyl-D-mannosamine. This chain is N-acylmannosamine 1-dehydrogenase, found in Flavobacterium sp. (strain 141-8).